The chain runs to 705 residues: Elongation factor G 2 (705 aa).

Residues 8-288 enclose the tr-type G domain; the sequence is ERYRNIGISA…AVIDYLPSPA (281 aa). Residues 17–24, 86–90, and 140–143 each bind GTP; these read AHIDAGKT, DTPGH, and NKMD.

This sequence belongs to the TRAFAC class translation factor GTPase superfamily. Classic translation factor GTPase family. EF-G/EF-2 subfamily.

The protein localises to the cytoplasm. Its function is as follows. Catalyzes the GTP-dependent ribosomal translocation step during translation elongation. During this step, the ribosome changes from the pre-translocational (PRE) to the post-translocational (POST) state as the newly formed A-site-bound peptidyl-tRNA and P-site-bound deacylated tRNA move to the P and E sites, respectively. Catalyzes the coordinated movement of the two tRNA molecules, the mRNA and conformational changes in the ribosome. The protein is Elongation factor G 2 of Bordetella parapertussis (strain 12822 / ATCC BAA-587 / NCTC 13253).